Reading from the N-terminus, the 303-residue chain is Glycine--tRNA ligase alpha subunit (303 aa).

This sequence belongs to the class-II aminoacyl-tRNA synthetase family. As to quaternary structure, tetramer of two alpha and two beta subunits.

Its subcellular location is the cytoplasm. It catalyses the reaction tRNA(Gly) + glycine + ATP = glycyl-tRNA(Gly) + AMP + diphosphate. The polypeptide is Glycine--tRNA ligase alpha subunit (Streptococcus equi subsp. equi (strain 4047)).